The following is a 319-amino-acid chain: Acetyl-coenzyme A carboxylase carboxyl transferase subunit alpha (319 aa).

In terms of domain architecture, CoA carboxyltransferase C-terminal spans 35 to 296 (NIDEEVHRLR…KAQLLADLAD (262 aa)).

The protein belongs to the AccA family. As to quaternary structure, acetyl-CoA carboxylase is a heterohexamer composed of biotin carboxyl carrier protein (AccB), biotin carboxylase (AccC) and two subunits each of ACCase subunit alpha (AccA) and ACCase subunit beta (AccD).

It is found in the cytoplasm. The catalysed reaction is N(6)-carboxybiotinyl-L-lysyl-[protein] + acetyl-CoA = N(6)-biotinyl-L-lysyl-[protein] + malonyl-CoA. It functions in the pathway lipid metabolism; malonyl-CoA biosynthesis; malonyl-CoA from acetyl-CoA: step 1/1. Functionally, component of the acetyl coenzyme A carboxylase (ACC) complex. First, biotin carboxylase catalyzes the carboxylation of biotin on its carrier protein (BCCP) and then the CO(2) group is transferred by the carboxyltransferase to acetyl-CoA to form malonyl-CoA. The chain is Acetyl-coenzyme A carboxylase carboxyl transferase subunit alpha from Escherichia coli O127:H6 (strain E2348/69 / EPEC).